Consider the following 287-residue polypeptide: Diphthine methyl ester synthase (287 aa).

Residues L9, D84, G87, 112-113 (SI), V163, V221, and H248 contribute to the S-adenosyl-L-methionine site.

The protein belongs to the diphthine synthase family.

It localises to the cytoplasm. The catalysed reaction is 2-[(3S)-amino-3-carboxypropyl]-L-histidyl-[translation elongation factor 2] + 4 S-adenosyl-L-methionine = diphthine methyl ester-[translation elongation factor 2] + 4 S-adenosyl-L-homocysteine + 3 H(+). Its pathway is protein modification; peptidyl-diphthamide biosynthesis. Functionally, S-adenosyl-L-methionine-dependent methyltransferase that catalyzes four methylations of the modified target histidine residue in translation elongation factor 2 (EF-2), to form an intermediate called diphthine methyl ester. The four successive methylation reactions represent the second step of diphthamide biosynthesis. This is Diphthine methyl ester synthase (DPH5) from Gibberella zeae (strain ATCC MYA-4620 / CBS 123657 / FGSC 9075 / NRRL 31084 / PH-1) (Wheat head blight fungus).